Reading from the N-terminus, the 158-residue chain is N-acetylgalactosamine-specific phosphotransferase enzyme IIB component 1 (158 aa).

A PTS EIIB type-4 domain is found at 1 to 158 (MTSPNILLTR…PGDQKEQIPD (158 aa)). The active-site Pros-phosphohistidine intermediate is the histidine 17.

Its subcellular location is the cytoplasm. The phosphoenolpyruvate-dependent sugar phosphotransferase system (sugar PTS), a major carbohydrate active -transport system, catalyzes the phosphorylation of incoming sugar substrates concomitantly with their translocation across the cell membrane. This system is involved in N-acetylgalactosamine transport. The polypeptide is N-acetylgalactosamine-specific phosphotransferase enzyme IIB component 1 (agaB) (Escherichia coli (strain K12)).